We begin with the raw amino-acid sequence, 247 residues long: Spermatogenesis-associated protein 46 (247 aa).

The segment at 125-164 (QRDSCLPEDTADSVCSSSPSPENTCPREATKKSRPGPDTT) is disordered. The span at 137 to 147 (SVCSSSPSPEN) shows a compositional bias: polar residues.

It localises to the nucleus membrane. Functionally, plays a role in spermiogenesis and fertilization. This chain is Spermatogenesis-associated protein 46 (SPATA46), found in Bos taurus (Bovine).